A 93-amino-acid chain; its full sequence is Pyrimidine/purine nucleoside phosphorylase (93 aa).

The protein belongs to the nucleoside phosphorylase PpnP family.

The enzyme catalyses a purine D-ribonucleoside + phosphate = a purine nucleobase + alpha-D-ribose 1-phosphate. The catalysed reaction is adenosine + phosphate = alpha-D-ribose 1-phosphate + adenine. It catalyses the reaction cytidine + phosphate = cytosine + alpha-D-ribose 1-phosphate. It carries out the reaction guanosine + phosphate = alpha-D-ribose 1-phosphate + guanine. The enzyme catalyses inosine + phosphate = alpha-D-ribose 1-phosphate + hypoxanthine. The catalysed reaction is thymidine + phosphate = 2-deoxy-alpha-D-ribose 1-phosphate + thymine. It catalyses the reaction uridine + phosphate = alpha-D-ribose 1-phosphate + uracil. It carries out the reaction xanthosine + phosphate = alpha-D-ribose 1-phosphate + xanthine. Functionally, catalyzes the phosphorolysis of diverse nucleosides, yielding D-ribose 1-phosphate and the respective free bases. Can use uridine, adenosine, guanosine, cytidine, thymidine, inosine and xanthosine as substrates. Also catalyzes the reverse reactions. The sequence is that of Pyrimidine/purine nucleoside phosphorylase from Aliivibrio salmonicida (strain LFI1238) (Vibrio salmonicida (strain LFI1238)).